Consider the following 132-residue polypeptide: Small ribosomal subunit protein uS13 (132 aa).

Residues 101-125 (RGLPVRGQRTKTNARTRKGPRKTVA) are compositionally biased toward basic residues. The segment at 101 to 132 (RGLPVRGQRTKTNARTRKGPRKTVANKKIETR) is disordered.

Belongs to the universal ribosomal protein uS13 family. Part of the 30S ribosomal subunit. Forms a loose heterodimer with protein S19. Forms two bridges to the 50S subunit in the 70S ribosome.

Located at the top of the head of the 30S subunit, it contacts several helices of the 16S rRNA. In the 70S ribosome it contacts the 23S rRNA (bridge B1a) and protein L5 of the 50S subunit (bridge B1b), connecting the 2 subunits; these bridges are implicated in subunit movement. Contacts the tRNAs in the A and P-sites. The chain is Small ribosomal subunit protein uS13 from Ureaplasma urealyticum serovar 10 (strain ATCC 33699 / Western).